The primary structure comprises 183 residues: uncharacterized protein (183 aa).

Belongs to the Bcl-2 family.

This is an uncharacterized protein from Equine herpesvirus 2 (strain 86/87) (EHV-2).